A 160-amino-acid polypeptide reads, in one-letter code: Putative 4-hydroxy-4-methyl-2-oxoglutarate aldolase (160 aa).

Substrate is bound by residues 76 to 79 (GGNL) and Arg-98. Asp-99 lines the a divalent metal cation pocket.

Belongs to the class II aldolase/RraA-like family. In terms of assembly, homotrimer. A divalent metal cation serves as cofactor.

It carries out the reaction 4-hydroxy-4-methyl-2-oxoglutarate = 2 pyruvate. It catalyses the reaction oxaloacetate + H(+) = pyruvate + CO2. Catalyzes the aldol cleavage of 4-hydroxy-4-methyl-2-oxoglutarate (HMG) into 2 molecules of pyruvate. Also contains a secondary oxaloacetate (OAA) decarboxylase activity due to the common pyruvate enolate transition state formed following C-C bond cleavage in the retro-aldol and decarboxylation reactions. The polypeptide is Putative 4-hydroxy-4-methyl-2-oxoglutarate aldolase (Deinococcus radiodurans (strain ATCC 13939 / DSM 20539 / JCM 16871 / CCUG 27074 / LMG 4051 / NBRC 15346 / NCIMB 9279 / VKM B-1422 / R1)).